Here is a 98-residue protein sequence, read N- to C-terminus: Integration host factor subunit alpha (98 aa).

The disordered stretch occupies residues 52 to 71 (FDLRDKNQRPGRNPKTGEDI).

Belongs to the bacterial histone-like protein family. In terms of assembly, heterodimer of an alpha and a beta chain.

Functionally, this protein is one of the two subunits of integration host factor, a specific DNA-binding protein that functions in genetic recombination as well as in transcriptional and translational control. The chain is Integration host factor subunit alpha from Photorhabdus laumondii subsp. laumondii (strain DSM 15139 / CIP 105565 / TT01) (Photorhabdus luminescens subsp. laumondii).